The sequence spans 115 residues: Prefoldin subunit beta (115 aa).

This sequence belongs to the prefoldin subunit beta family. In terms of assembly, heterohexamer of two alpha and four beta subunits.

Its subcellular location is the cytoplasm. Functionally, molecular chaperone capable of stabilizing a range of proteins. Seems to fulfill an ATP-independent, HSP70-like function in archaeal de novo protein folding. The sequence is that of Prefoldin subunit beta from Methanococcus aeolicus (strain ATCC BAA-1280 / DSM 17508 / OCM 812 / Nankai-3).